A 502-amino-acid polypeptide reads, in one-letter code: MTDQVQDENKLIAERRAKLDMIRKNCKANGHPNDFRRDSLAADLQATFGEKTKPELEEEGHIVAIAGRVMAKRGPFLAIQDVSGRIQAYADKTVQKELKEKYSGLDIGDIIGVKGQLHLSGKGDLYVTMDNYELLTKALRPLPEKFHGLTDQETRYRQRYVDLIVNEDSRNTMIMRSKVVSAIRNFMMKKDFMEVETPMMHVIPGGATARPFITHHNALDIDMYLRVAPELYLKRLVVGGFERVFEINRNFRNEGLSPRHNPEFTMMEFYMAYADYNDLMDLTEEMLSSIATDLHGSPKLPYGDAIVDFGGPYPRISMLNAIKQYNPDNAEIQALTYEQVADRELMANIARGLDIYVEKFWTCGQLLEEIFGETAEPQLMQPTFITEYPADISPLARRNDTNDFITDRFEFFIGGREVANGFSELNDAQDQDQRFKAQVNAKDAGDDEAMYYDADYITALEHGLPPTAGQGIGIDRLVMLFTNTHTIRDVILFPALRPQNKA.

Glu-410 and Glu-417 together coordinate Mg(2+).

It belongs to the class-II aminoacyl-tRNA synthetase family. Homodimer. The cofactor is Mg(2+).

Its subcellular location is the cytoplasm. The enzyme catalyses tRNA(Lys) + L-lysine + ATP = L-lysyl-tRNA(Lys) + AMP + diphosphate. The protein is Lysine--tRNA ligase of Photobacterium profundum (strain SS9).